The chain runs to 205 residues: Ribosome maturation factor RimP (205 aa).

Over residues 1-13 the composition is skewed to polar residues; sequence MSNAEATTSSDRT. The tract at residues 1–27 is disordered; that stretch reads MSNAEATTSSDRTGTGKAEAESVHNPE. Basic and acidic residues predominate over residues 18–27; that stretch reads AEAESVHNPE.

It belongs to the RimP family.

It is found in the cytoplasm. In terms of biological role, required for maturation of 30S ribosomal subunits. The polypeptide is Ribosome maturation factor RimP (Arthrobacter sp. (strain FB24)).